The primary structure comprises 232 residues: Large ribosomal subunit protein uL1 (232 aa).

This sequence belongs to the universal ribosomal protein uL1 family. As to quaternary structure, part of the 50S ribosomal subunit.

In terms of biological role, binds directly to 23S rRNA. The L1 stalk is quite mobile in the ribosome, and is involved in E site tRNA release. Functionally, protein L1 is also a translational repressor protein, it controls the translation of the L11 operon by binding to its mRNA. This is Large ribosomal subunit protein uL1 from Methylorubrum populi (strain ATCC BAA-705 / NCIMB 13946 / BJ001) (Methylobacterium populi).